The following is a 132-amino-acid chain: Small ribosomal subunit protein uS8 (132 aa).

It belongs to the universal ribosomal protein uS8 family. As to quaternary structure, part of the 30S ribosomal subunit. Contacts proteins S5 and S12.

Its function is as follows. One of the primary rRNA binding proteins, it binds directly to 16S rRNA central domain where it helps coordinate assembly of the platform of the 30S subunit. This Bartonella quintana (strain Toulouse) (Rochalimaea quintana) protein is Small ribosomal subunit protein uS8.